The following is a 300-amino-acid chain: NADH-ubiquinone oxidoreductase chain 2 (300 aa).

9 helical membrane passes run 4–24 (FFCIFVVFLCVLNFFTSNVLV), 29–49 (FLLMTVVFVCLSKGSGSYVGI), 58–78 (SLGLFFLVFNVFLLQFFIVMM), 87–107 (FWVFSVTGSLYDWLLMWFLTF), 122–142 (FSAFFIFLFGICVCYFQLFVL), 165–185 (FLSVVNVIYLFFYYVVLMAFL), 201–221 (VLLVFLNVPFSVSFFIKIFVL), 231–251 (FLLFLLLMMFLSMLCFSLWLV), and 267–287 (VLFFLVFPMMVFSVIYYFSKI).

Belongs to the complex I subunit 2 family.

It is found in the mitochondrion inner membrane. The catalysed reaction is a ubiquinone + NADH + 5 H(+)(in) = a ubiquinol + NAD(+) + 4 H(+)(out). Its function is as follows. Core subunit of the mitochondrial membrane respiratory chain NADH dehydrogenase (Complex I) that is believed to belong to the minimal assembly required for catalysis. Complex I functions in the transfer of electrons from NADH to the respiratory chain. The immediate electron acceptor for the enzyme is believed to be ubiquinone. This Ascaris suum (Pig roundworm) protein is NADH-ubiquinone oxidoreductase chain 2 (ND2).